Reading from the N-terminus, the 95-residue chain is Co-chaperonin GroES (95 aa).

Residues 12–22 are compositionally biased toward basic and acidic residues; the sequence is VKPSPAEEKTK. Positions 12–38 are disordered; it reads VKPSPAEEKTKGGLYIPDSGKEKPQHG.

This sequence belongs to the GroES chaperonin family. As to quaternary structure, heptamer of 7 subunits arranged in a ring. Interacts with the chaperonin GroEL.

It is found in the cytoplasm. In terms of biological role, together with the chaperonin GroEL, plays an essential role in assisting protein folding. The GroEL-GroES system forms a nano-cage that allows encapsulation of the non-native substrate proteins and provides a physical environment optimized to promote and accelerate protein folding. GroES binds to the apical surface of the GroEL ring, thereby capping the opening of the GroEL channel. The chain is Co-chaperonin GroES from Chloroherpeton thalassium (strain ATCC 35110 / GB-78).